A 187-amino-acid polypeptide reads, in one-letter code: Putative manganese efflux pump MntP (187 aa).

Transmembrane regions (helical) follow at residues 8-28, 39-59, 65-85, 106-126, 131-151, and 166-186; these read FLSI…GFII, IALF…LTGL, LANF…GKMI, LFAL…GLSV, ILLA…IGVF, and ILGG…GLII.

It belongs to the MntP (TC 9.B.29) family.

It localises to the cell inner membrane. Its function is as follows. Probably functions as a manganese efflux pump. In Rippkaea orientalis (strain PCC 8801 / RF-1) (Cyanothece sp. (strain PCC 8801)), this protein is Putative manganese efflux pump MntP.